The chain runs to 186 residues: Elongation factor P (186 aa).

Belongs to the elongation factor P family.

The protein localises to the cytoplasm. It participates in protein biosynthesis; polypeptide chain elongation. Functionally, involved in peptide bond synthesis. Stimulates efficient translation and peptide-bond synthesis on native or reconstituted 70S ribosomes in vitro. Probably functions indirectly by altering the affinity of the ribosome for aminoacyl-tRNA, thus increasing their reactivity as acceptors for peptidyl transferase. The polypeptide is Elongation factor P (Streptococcus gordonii (strain Challis / ATCC 35105 / BCRC 15272 / CH1 / DL1 / V288)).